The following is a 165-amino-acid chain: Lipoprotein signal peptidase (165 aa).

The next 5 membrane-spanning stretches (helical) occupy residues 10–30 (LKWL…KYWV), 42–62 (VLPG…GLFT), 71–91 (LFVW…YKLI), 105–125 (IGGA…VDFI), and 133–153 (HWPT…IVTI). Residues D123 and D141 contribute to the active site.

This sequence belongs to the peptidase A8 family.

Its subcellular location is the cell inner membrane. It catalyses the reaction Release of signal peptides from bacterial membrane prolipoproteins. Hydrolyzes -Xaa-Yaa-Zaa-|-(S,diacylglyceryl)Cys-, in which Xaa is hydrophobic (preferably Leu), and Yaa (Ala or Ser) and Zaa (Gly or Ala) have small, neutral side chains.. Its pathway is protein modification; lipoprotein biosynthesis (signal peptide cleavage). This protein specifically catalyzes the removal of signal peptides from prolipoproteins. This chain is Lipoprotein signal peptidase, found in Blochmanniella pennsylvanica (strain BPEN).